The sequence spans 182 residues: Adenine phosphoribosyltransferase (182 aa).

This sequence belongs to the purine/pyrimidine phosphoribosyltransferase family. As to quaternary structure, homodimer.

The protein resides in the cytoplasm. The catalysed reaction is AMP + diphosphate = 5-phospho-alpha-D-ribose 1-diphosphate + adenine. The protein operates within purine metabolism; AMP biosynthesis via salvage pathway; AMP from adenine: step 1/1. In terms of biological role, catalyzes a salvage reaction resulting in the formation of AMP, that is energically less costly than de novo synthesis. This is Adenine phosphoribosyltransferase from Pseudomonas syringae pv. syringae (strain B728a).